The chain runs to 256 residues: Fructose-1,6-bisphosphatase/inositol-1-monophosphatase (256 aa).

Residues E65, D79, I81, and D82 each contribute to the Mg(2+) site. Substrate-binding positions include 82 to 84 (DGT), R172, A177, and R196. Residue D201 coordinates Mg(2+).

It belongs to the inositol monophosphatase superfamily. FBPase class 4 family. As to quaternary structure, homotetramer. The cofactor is Mg(2+).

It catalyses the reaction beta-D-fructose 1,6-bisphosphate + H2O = beta-D-fructose 6-phosphate + phosphate. It carries out the reaction a myo-inositol phosphate + H2O = myo-inositol + phosphate. With respect to regulation, in contrast to mammalian I-1-P phosphatases, is only weakly inhibited by Li(+), since 50% inhibitory concentration for Li(+) is about 100 mM, and the Li(+) concentration required to totally abolish I-1-Pase activity is 1 M. Phosphatase with broad specificity; it can dephosphorylate fructose 1,6-bisphosphate, both D and L isomers of inositol-1-phosphate (I-1-P) but displaying a 20-fold higher rate of hydrolysis of D-I-1-P than of the L isomer, 2'-AMP, pNPP, inositol-2-phosphate, beta-glycerol phosphate, and alpha-D-glucose-1-phosphate. Cannot hydrolyze glucose-6-phosphate, fructose-6-phosphate, 5'-AMP and NAD(+). May be involved in the biosynthesis of a unique osmolyte, di-myo-inositol 1,1-phosphate. This Thermotoga maritima (strain ATCC 43589 / DSM 3109 / JCM 10099 / NBRC 100826 / MSB8) protein is Fructose-1,6-bisphosphatase/inositol-1-monophosphatase (suhB).